We begin with the raw amino-acid sequence, 673 residues long: UvrABC system protein B (673 aa).

The region spanning 26 to 183 (EGLEDGLAHQ…RRLAELQYTR (158 aa)) is the Helicase ATP-binding domain. 39-46 (GVTGSGKT) is a binding site for ATP. Positions 92 to 115 (YYDYYQPEAYVPSSDTFIEKDASV) match the Beta-hairpin motif. A Helicase C-terminal domain is found at 431–597 (QVDDLLSEIR…GLNKKVVDIL (167 aa)). A UVR domain is found at 633–668 (QQKIHELEGQMMQHAQNLEFEEAAQIRDQLHQLREL).

Belongs to the UvrB family. As to quaternary structure, forms a heterotetramer with UvrA during the search for lesions. Interacts with UvrC in an incision complex.

The protein resides in the cytoplasm. The UvrABC repair system catalyzes the recognition and processing of DNA lesions. A damage recognition complex composed of 2 UvrA and 2 UvrB subunits scans DNA for abnormalities. Upon binding of the UvrA(2)B(2) complex to a putative damaged site, the DNA wraps around one UvrB monomer. DNA wrap is dependent on ATP binding by UvrB and probably causes local melting of the DNA helix, facilitating insertion of UvrB beta-hairpin between the DNA strands. Then UvrB probes one DNA strand for the presence of a lesion. If a lesion is found the UvrA subunits dissociate and the UvrB-DNA preincision complex is formed. This complex is subsequently bound by UvrC and the second UvrB is released. If no lesion is found, the DNA wraps around the other UvrB subunit that will check the other stand for damage. This chain is UvrABC system protein B, found in Klebsiella pneumoniae subsp. pneumoniae (strain ATCC 700721 / MGH 78578).